The sequence spans 214 residues: Probable nicotinate-nucleotide adenylyltransferase (214 aa).

The protein belongs to the NadD family.

The enzyme catalyses nicotinate beta-D-ribonucleotide + ATP + H(+) = deamido-NAD(+) + diphosphate. It functions in the pathway cofactor biosynthesis; NAD(+) biosynthesis; deamido-NAD(+) from nicotinate D-ribonucleotide: step 1/1. In terms of biological role, catalyzes the reversible adenylation of nicotinate mononucleotide (NaMN) to nicotinic acid adenine dinucleotide (NaAD). This chain is Probable nicotinate-nucleotide adenylyltransferase, found in Thermomicrobium roseum (strain ATCC 27502 / DSM 5159 / P-2).